The following is a 488-amino-acid chain: Dipeptide and tripeptide permease B (488 aa).

Over 1-27 the chain is Cytoplasmic; that stretch reads MSKTASVGLWDQPKPFFMIFFVELWER. A helical membrane pass occupies residues 28–48; the sequence is FGFYGVQGILAIYFVQQLGFS. The Periplasmic segment spans residues 49–52; that stretch reads EEQS. The chain crosses the membrane as a helical span at residues 53 to 73; sequence FITFGAFTALVYGLISVGGYV. Topologically, residues 74–82 are cytoplasmic; that stretch reads GDHILGTKR. The chain crosses the membrane as a helical span at residues 83 to 103; sequence TIVLGAIVMAIGYYMIGLSIM. At 104–106 the chain is on the periplasmic side; that stretch reads KPE. The chain crosses the membrane as a helical span at residues 107–127; the sequence is LIFYALGTVAVGNGLFKANPA. Over 128-146 the chain is Cytoplasmic; it reads SLLAKCYQPQDPRLDGAFT. The chain crosses the membrane as a helical span at residues 147–167; that stretch reads LFYMSINLGSLFSLSLAPVIA. Residues 168 to 172 lie on the Periplasmic side of the membrane; that stretch reads EKYGY. A helical membrane pass occupies residues 173 to 193; sequence TVTYNICGIGLIIALLVYIAC. Over 194 to 211 the chain is Cytoplasmic; it reads RRMVHNIGSAPDHHPVKP. A helical membrane pass occupies residues 212–232; it reads IGLIAVLIGSVVMVGVCAWLL. The Periplasmic segment spans residues 233-234; it reads HN. A helical membrane pass occupies residues 235 to 255; the sequence is IKVANIALFAITTIVVLIFFW. The Cytoplasmic portion of the chain corresponds to 256–267; the sequence is QAFKQNRVGRNK. A helical membrane pass occupies residues 268 to 288; sequence MFVAFILMLQAVVFFILYNQM. The Periplasmic segment spans residues 289-311; the sequence is PMSLNFFAINNVHHQILGFDVNP. Residues 312–332 traverse the membrane as a helical segment; that stretch reads VSFQAFNPFWIIIVSPILAVV. The Cytoplasmic portion of the chain corresponds to 333-348; it reads YTKLGAKGKDFSMPAK. A helical membrane pass occupies residues 349-369; it reads FTFGMFLCSLGFLTAAASGLF. Residues 370–378 lie on the Periplasmic side of the membrane; that stretch reads ADAQGITSP. Residues 379-399 form a helical membrane-spanning segment; it reads WFIVLVYLFQSVGELMISALG. The Cytoplasmic segment spans residues 400 to 423; that stretch reads LAMVAAFVPSYLTGFILGMWFLSQ. A helical transmembrane segment spans residues 424-444; that stretch reads AVASMLASHVAALTATPVGVT. Over 445–455 the chain is Periplasmic; the sequence is DPLQTLPIYMS. A helical membrane pass occupies residues 456–476; that stretch reads VFGKIGVATLIVAIIMTFMVP. Residues 477 to 488 are Cytoplasmic-facing; sequence WLNRIMREEVKA.

Belongs to the major facilitator superfamily. Proton-dependent oligopeptide transporter (POT/PTR) (TC 2.A.17) family. DtpB subfamily.

Its subcellular location is the cell inner membrane. Proton-dependent permease that transports di- and tripeptides. The protein is Dipeptide and tripeptide permease B of Xenorhabdus bovienii (strain SS-2004) (Xenorhabdus nematophila subsp. bovienii).